The sequence spans 345 residues: Phosphoribosylformylglycinamidine cyclo-ligase (345 aa).

Belongs to the AIR synthase family.

It localises to the cytoplasm. It carries out the reaction 2-formamido-N(1)-(5-O-phospho-beta-D-ribosyl)acetamidine + ATP = 5-amino-1-(5-phospho-beta-D-ribosyl)imidazole + ADP + phosphate + H(+). It functions in the pathway purine metabolism; IMP biosynthesis via de novo pathway; 5-amino-1-(5-phospho-D-ribosyl)imidazole from N(2)-formyl-N(1)-(5-phospho-D-ribosyl)glycinamide: step 2/2. In Shewanella baltica (strain OS223), this protein is Phosphoribosylformylglycinamidine cyclo-ligase.